A 442-amino-acid chain; its full sequence is Sexual development regulator VELC (442 aa).

Disordered stretches follow at residues 1-192 (MPVH…ASLA) and 396-442 (KKGN…IRRS). The span at 45 to 54 (IAPPPPPTPP) shows a compositional bias: pro residues. Over residues 79-97 (PGPRRPSNPSSPQHPQQPG) the composition is skewed to low complexity. Residues 213–396 (FSTSEYHLHV…KEQGCLISIK (184 aa)) enclose the Velvet domain. The segment covering 401 to 411 (KGGGGGGGGPS) has biased composition (gly residues). Residues 433–442 (AGKRKRIRRS) show a composition bias toward basic residues.

The protein belongs to the velvet family. VelC subfamily.

It localises to the nucleus. In terms of biological role, velvet-domain-containing protein that acts as a positive regulator of sexual development. Plays an important role in pathogenicity through regulating positively appressorium-mediated penetration and invasive growth. The sequence is that of Sexual development regulator VELC from Pyricularia oryzae (strain 70-15 / ATCC MYA-4617 / FGSC 8958) (Rice blast fungus).